We begin with the raw amino-acid sequence, 88 residues long: UPF0250 protein Shewmr4_0986 (88 aa).

It belongs to the UPF0250 family.

This chain is UPF0250 protein Shewmr4_0986, found in Shewanella sp. (strain MR-4).